The following is a 552-amino-acid chain: Histone deacetylase 15 (552 aa).

The RanBP2-type zinc finger occupies 86–115 (EFVKWCCVNCTMSNPGDMVHCCICGEHKES). Residues 149–462 (STAVGFDERM…ATAVIKVLLG (314 aa)) are histone deacetylase. The Proton donor/acceptor role is filled by His-277. 3 residues coordinate Zn(2+): Asp-313, His-315, and Asp-404.

Belongs to the histone deacetylase family. HD type 2 subfamily. Interacts with PIF3 in the dark. Interacts with HY5. Interacts with MYB96. Forms homotetramers. It depends on Zn(2+) as a cofactor. In terms of tissue distribution, expressed in stems, leaves, flowers, siliques and mature seeds.

Its subcellular location is the nucleus. The protein localises to the cytoplasm. It carries out the reaction N(6)-acetyl-L-lysyl-[histone] + H2O = L-lysyl-[histone] + acetate. With respect to regulation, inhibited by trichostatin A (TSA), a well-known histone deacetylase inhibitor. In terms of biological role, responsible for the deacetylation of lysine residues on the N-terminal part of the core histones (H2A, H2B, H3 and H4). Histone deacetylation gives a tag for epigenetic repression and plays an important role in transcriptional regulation, cell cycle progression and developmental events. Histone deacetylases act via the formation of large multiprotein complexes. Represses chlorophyll biosynthesis and photosynthesis in the dark. Is recruited by PIF3 to the promoters of chlorophyll biosynthetic and photosynthetic genes, and represses their transcription by histone deacetylation. Involved in the repression of hypocotyl cell elongation to promote photomorphogenesis. Is recruited by HY5 to the promoters of a subset of cell wall organization and auxin signaling-related genes, and represses gene expression by decreasing the levels of histone H4 acetylation in a light-dependent manner. Promotes abscisic acid (ABA) signaling. Is recruited by MYB96 to the promoters of a subset of Rho GTPase (ROP) genes, which repress ABA signaling at the early stages of signal transduction. Represses ROP expression by removing acetyl groups of histone H3 and H4 from the cognate regions, particularly in the presence of ABA. Represses the plant response to elevated ambient temperature by directly repressing warm temperature-responsive genes. The polypeptide is Histone deacetylase 15 (Arabidopsis thaliana (Mouse-ear cress)).